The primary structure comprises 141 residues: Hemoglobin subunit alpha-A (141 aa).

The region spanning 1–141 (VLSGTDKTNV…VGAVLTAKYR (141 aa)) is the Globin domain. Residue His-58 coordinates O2. A heme b-binding site is contributed by His-87.

It belongs to the globin family. Heterotetramer of two alpha chains and two beta chains. As to expression, red blood cells.

Its function is as follows. Involved in oxygen transport from the lung to the various peripheral tissues. The protein is Hemoglobin subunit alpha-A (HBAA) of Struthio camelus (Common ostrich).